We begin with the raw amino-acid sequence, 103 residues long: Large ribosomal subunit protein bL21 (103 aa).

The protein belongs to the bacterial ribosomal protein bL21 family. Part of the 50S ribosomal subunit. Contacts protein L20.

In terms of biological role, this protein binds to 23S rRNA in the presence of protein L20. The chain is Large ribosomal subunit protein bL21 from Shewanella woodyi (strain ATCC 51908 / MS32).